The chain runs to 466 residues: Soluble pyridine nucleotide transhydrogenase (466 aa).

36–45 (ERYHNVGGGC) serves as a coordination point for FAD.

The protein belongs to the class-I pyridine nucleotide-disulfide oxidoreductase family. Requires FAD as cofactor.

The protein resides in the cytoplasm. It catalyses the reaction NAD(+) + NADPH = NADH + NADP(+). Its function is as follows. Conversion of NADPH, generated by peripheral catabolic pathways, to NADH, which can enter the respiratory chain for energy generation. The polypeptide is Soluble pyridine nucleotide transhydrogenase (Salmonella gallinarum (strain 287/91 / NCTC 13346)).